A 214-amino-acid polypeptide reads, in one-letter code: Large ribosomal subunit protein uL3 (214 aa).

The tract at residues 129 to 157 is disordered; the sequence is FGRGPMSHGSKNHRRPGSIGAGTTPGRVF.

The protein belongs to the universal ribosomal protein uL3 family. Part of the 50S ribosomal subunit. Forms a cluster with proteins L14 and L19.

One of the primary rRNA binding proteins, it binds directly near the 3'-end of the 23S rRNA, where it nucleates assembly of the 50S subunit. In Synechococcus sp. (strain JA-2-3B'a(2-13)) (Cyanobacteria bacterium Yellowstone B-Prime), this protein is Large ribosomal subunit protein uL3.